Consider the following 367-residue polypeptide: MKKQSKTHKVDYKYYNSGSKTSRNRNVQQLETNNKIPQSDVVGPVVKISKEVTNETDIISPNNPIINQNQEIFDTYQKSYIEAKKFLNDHNIKISTITLDCKLGTLIDVDLFAKNVILKEDQIVSVKFGNRNDPATNRTIVVLKTKKKPSTKNFYNQVTILMKPTNNPERNYINIKVFKNGSLQMTGCKDMEDFNNVTVKLIEILKNGRRSKKDNKHIKFITDPNKIGIYDVKIRMINSDFKLDYKVDRKKLAKILKKYHGQNTKDKEIGYVECKYQPTGGHSCVNIKYNNDGNKTSIFVFQTGSIIITGAKNLNHIISAYFFIHKVLSRYYKKIKILPLQQNLVQLEIAKYFQKVNQKTYPVEIQE.

The disordered stretch occupies residues 1 to 26 (MKKQSKTHKVDYKYYNSGSKTSRNRN). Residues 16-26 (NSGSKTSRNRN) show a composition bias toward polar residues.

Belongs to the TBP family.

This is TATA-box-binding protein-like from Acanthamoeba polyphaga (Amoeba).